A 170-amino-acid chain; its full sequence is Large ribosomal subunit protein uL18c (170 aa).

Residues 1-63 (MLASPALAGA…QADRIARHVR (63 aa)) constitute a chloroplast transit peptide.

The protein belongs to the universal ribosomal protein uL18 family. In terms of assembly, part of the 50S ribosomal subunit; contacts the 5S rRNA.

The protein localises to the plastid. It is found in the chloroplast. Its function is as follows. Binds 5S rRNA, forms part of the central protuberance of the 50S subunit. This Oryza sativa subsp. japonica (Rice) protein is Large ribosomal subunit protein uL18c (RPL18).